A 446-amino-acid polypeptide reads, in one-letter code: UDP-N-acetylmuramoylalanine--D-glutamate ligase (446 aa).

115–121 lines the ATP pocket; it reads GTNGKTT.

This sequence belongs to the MurCDEF family.

The protein localises to the cytoplasm. It catalyses the reaction UDP-N-acetyl-alpha-D-muramoyl-L-alanine + D-glutamate + ATP = UDP-N-acetyl-alpha-D-muramoyl-L-alanyl-D-glutamate + ADP + phosphate + H(+). It participates in cell wall biogenesis; peptidoglycan biosynthesis. Functionally, cell wall formation. Catalyzes the addition of glutamate to the nucleotide precursor UDP-N-acetylmuramoyl-L-alanine (UMA). The polypeptide is UDP-N-acetylmuramoylalanine--D-glutamate ligase (Trichlorobacter lovleyi (strain ATCC BAA-1151 / DSM 17278 / SZ) (Geobacter lovleyi)).